We begin with the raw amino-acid sequence, 118 residues long: Fluoride-specific ion channel FluC 1 (118 aa).

4 helical membrane passes run 5-25 (FVLV…ISVL), 34-54 (FPFA…FLVS), 56-76 (ALGP…YTTF), and 98-118 (YLGC…MLGV). Na(+) is bound by residues Gly-71 and Thr-74.

The protein belongs to the fluoride channel Fluc/FEX (TC 1.A.43) family.

It localises to the cell membrane. The catalysed reaction is fluoride(in) = fluoride(out). With respect to regulation, na(+) is not transported, but it plays an essential structural role and its presence is essential for fluoride channel function. Functionally, fluoride-specific ion channel. Important for reducing fluoride concentration in the cell, thus reducing its toxicity. In Listeria monocytogenes serotype 4b (strain F2365), this protein is Fluoride-specific ion channel FluC 1.